Reading from the N-terminus, the 251-residue chain is Pyrroloquinoline-quinone synthase (251 aa).

The protein belongs to the PqqC family.

The catalysed reaction is 6-(2-amino-2-carboxyethyl)-7,8-dioxo-1,2,3,4,7,8-hexahydroquinoline-2,4-dicarboxylate + 3 O2 = pyrroloquinoline quinone + 2 H2O2 + 2 H2O + H(+). It functions in the pathway cofactor biosynthesis; pyrroloquinoline quinone biosynthesis. Ring cyclization and eight-electron oxidation of 3a-(2-amino-2-carboxyethyl)-4,5-dioxo-4,5,6,7,8,9-hexahydroquinoline-7,9-dicarboxylic-acid to PQQ. The polypeptide is Pyrroloquinoline-quinone synthase (Pseudomonas syringae pv. syringae (strain B728a)).